Here is a 213-residue protein sequence, read N- to C-terminus: Phosphatidylcholine transfer protein (213 aa).

Met1 carries the post-translational modification N-acetylmethionine. The START domain maps to 1 to 212 (MDPGAGAFSE…MVKACQNYKK (212 aa)). Residues Tyr72 and Arg78 each contribute to the a 1,2-diacyl-sn-glycero-3-phosphocholine site. Ser139 carries the phosphoserine modification. Gln157 is an a 1,2-diacyl-sn-glycero-3-phosphocholine binding site. The segment at 171-176 (VFMYYF) is part of the binding site for phosphatidylcholine.

Interacts with ACOT13/THEM2.

It is found in the cytoplasm. Catalyzes the transfer of phosphatidylcholine between membranes. Binds phosphatidylcholine in a tight 1:1 stoichiometric complex. The polypeptide is Phosphatidylcholine transfer protein (PCTP) (Bos taurus (Bovine)).